We begin with the raw amino-acid sequence, 25 residues long: Chrysophsin-2 (25 aa).

The residue at position 25 (H25) is a Histidine amide.

In terms of tissue distribution, gill.

Its subcellular location is the secreted. Has antibacterial activity against Gram-positive bacteria B.subtilis ATCC 6633, L.garvieae ATCC 49156 and S.iniae F-8502, and Gram-negative bacteria E.coli WT-2, V.anguillarum ATCC 19264, V.penaeicida KHA, V.harveyi ATCC 14126, V.vulnificus ATCC 33148 and A.salmonicida NCMB 1102. Has hemolytic activity against human red blood cells. Seems to disrupt the membranes by adopting an alpha helical conformation. May play a significant role in innate host defense. This Pagrus major (Red sea bream) protein is Chrysophsin-2.